The sequence spans 176 residues: Alkyl hydroperoxide reductase AhpD (176 aa).

Residue Cys-131 is the Proton donor of the active site. Cys-131 and Cys-134 form a disulfide bridge. Cys-134 functions as the Cysteine sulfenic acid (-SOH) intermediate in the catalytic mechanism.

It belongs to the AhpD family.

The catalysed reaction is N(6)-[(R)-dihydrolipoyl]-L-lysyl-[lipoyl-carrier protein] + a hydroperoxide = N(6)-[(R)-lipoyl]-L-lysyl-[lipoyl-carrier protein] + an alcohol + H2O. Its function is as follows. Antioxidant protein with alkyl hydroperoxidase activity. Required for the reduction of the AhpC active site cysteine residues and for the regeneration of the AhpC enzyme activity. The sequence is that of Alkyl hydroperoxide reductase AhpD from Methylobacterium sp. (strain 4-46).